Reading from the N-terminus, the 360-residue chain is Transcriptional coactivator MYCFIDRAFT_190109 (360 aa).

An HTH iclR-type domain is found at 3-67 (GMALNQLLAC…GFLHEPRPGQ (65 aa)). The segment at residues 33–52 (ARDVADLTGVPETQLCRVVR) is a DNA-binding region (H-T-H motif).

It is found in the nucleus. Functionally, transcriptional coactivator; part of the gene cluster that mediates the biosynthesis of an emodin derivative that may be involved in black Sigatoka disease of banana. With MYCFIDRAFT_198930, coregulates the production of the PKS8-1 cluster product. This Pseudocercospora fijiensis (strain CIRAD86) (Black leaf streak disease fungus) protein is Transcriptional coactivator MYCFIDRAFT_190109.